The primary structure comprises 590 residues: Acetolactate synthase large subunit (590 aa).

Glutamate 61 serves as a coordination point for thiamine diphosphate. Residues arginine 163, 271–292, and 314–333 contribute to the FAD site; these read HGTA…LGAR and DIDP…IVGD. Residues 405-484 form a thiamine pyrophosphate binding region; it reads QHQMWSAQFL…VKIIIINNRW (80 aa). Aspartate 455 and asparagine 482 together coordinate Mg(2+).

It belongs to the TPP enzyme family. As to quaternary structure, dimer of large and small chains. Mg(2+) serves as cofactor. The cofactor is thiamine diphosphate.

Its subcellular location is the plastid. It localises to the chloroplast. It catalyses the reaction 2 pyruvate + H(+) = (2S)-2-acetolactate + CO2. It participates in amino-acid biosynthesis; L-isoleucine biosynthesis; L-isoleucine from 2-oxobutanoate: step 1/4. Its pathway is amino-acid biosynthesis; L-valine biosynthesis; L-valine from pyruvate: step 1/4. The chain is Acetolactate synthase large subunit (ilvB) from Pyropia yezoensis (Susabi-nori).